The chain runs to 495 residues: Lysine--tRNA ligase (495 aa).

Mg(2+)-binding residues include Glu-406 and Glu-413.

It belongs to the class-II aminoacyl-tRNA synthetase family. Homodimer. It depends on Mg(2+) as a cofactor.

The protein localises to the cytoplasm. The catalysed reaction is tRNA(Lys) + L-lysine + ATP = L-lysyl-tRNA(Lys) + AMP + diphosphate. This Staphylococcus aureus (strain COL) protein is Lysine--tRNA ligase.